A 438-amino-acid chain; its full sequence is 23S rRNA (uracil(1939)-C(5))-methyltransferase RlmD (438 aa).

A TRAM domain is found at Phe-4–Arg-68. Cys-81, Cys-87, Cys-90, and Cys-167 together coordinate [4Fe-4S] cluster. S-adenosyl-L-methionine contacts are provided by Gln-269, Phe-298, Asn-303, Glu-319, Asn-346, and Asp-367. The active-site Nucleophile is Cys-393.

It belongs to the class I-like SAM-binding methyltransferase superfamily. RNA M5U methyltransferase family. RlmD subfamily.

It catalyses the reaction uridine(1939) in 23S rRNA + S-adenosyl-L-methionine = 5-methyluridine(1939) in 23S rRNA + S-adenosyl-L-homocysteine + H(+). In terms of biological role, catalyzes the formation of 5-methyl-uridine at position 1939 (m5U1939) in 23S rRNA. The sequence is that of 23S rRNA (uracil(1939)-C(5))-methyltransferase RlmD from Edwardsiella ictaluri (strain 93-146).